The following is a 285-amino-acid chain: Xanthoxin dehydrogenase (285 aa).

Ser-2 is modified (N-acetylserine).

The protein belongs to the short-chain dehydrogenases/reductases (SDR) family. In terms of tissue distribution, predominantly in roots and stems, and at lower levels in leaves and seeds.

Its subcellular location is the cytoplasm. The catalysed reaction is 2-cis,4-trans-xanthoxin + NAD(+) = 2-cis-(+)-abscisic aldehyde + NADH + H(+). It carries out the reaction 2-trans,4-trans-xanthoxin + NAD(+) = 2-trans-(+)-abscisic aldehyde + NADH + H(+). Functionally, involved in the biosynthesis of abscisic acid. Catalyzes the conversion of xanthoxin to abscisic aldehyde. In Arabidopsis thaliana (Mouse-ear cress), this protein is Xanthoxin dehydrogenase.